Here is a 91-residue protein sequence, read N- to C-terminus: LYR motif-containing protein 4 (91 aa).

Residues Arg6 and Lys44 each coordinate pantetheine 4'-phosphate. Position 47 is an N6-succinyllysine (Lys47).

This sequence belongs to the complex I LYR family. In terms of assembly, homodimer. Component of the mitochondrial core iron-sulfur cluster (ISC) complex composed of NFS1, LYRM4, NDUFAB1, ISCU, FXN, and FDX2; this complex is a heterohexamer containing two copies of each monomer. Component of the cyteine desulfurase complex composed of NFS1, LYRM4 and NDUFAB1; this complex contributes to the stability and cysteine desulfurase activity of NFS1. Interacts with FXN; this interaction is nickel-dependent. Interacts with the cytoplasmic form of NFS1; the complex increases the stability of NFS1. Forms a complex with the cytoplasmic form of NFS1; this complex increases the stability and cysteine desulfurase activity of NFS1. Interacts with NFS1.

Its subcellular location is the mitochondrion. The protein localises to the nucleus. Its pathway is cofactor biosynthesis; iron-sulfur cluster biosynthesis. In terms of biological role, stabilizing factor, of the core iron-sulfur cluster (ISC) assembly complex, that regulates, in association with NDUFAB1, the stability and the cysteine desulfurase activity of NFS1 and participates in the [2Fe-2S] clusters assembly on the scaffolding protein ISCU. The core iron-sulfur cluster (ISC) assembly complex is involved in the de novo synthesis of a [2Fe-2S] cluster, the first step of the mitochondrial iron-sulfur protein biogenesis. This process is initiated by the cysteine desulfurase complex (NFS1:LYRM4:NDUFAB1) that produces persulfide which is delivered on the scaffold protein ISCU in a FXN-dependent manner. Then this complex is stabilized by FDX2 which provides reducing equivalents to accomplish the [2Fe-2S] cluster assembly. Finally, the [2Fe-2S] cluster is transferred from ISCU to chaperone proteins, including HSCB, HSPA9 and GLRX5. May also participates in the iron-sulfur protein biogenesis in the cytoplasm through its interaction with the cytoplasmic form of NFS1. In Bos taurus (Bovine), this protein is LYR motif-containing protein 4.